The following is a 316-amino-acid chain: 4-amino-5-hydroxymethyl-2-methylpyrimidine phosphate synthase (316 aa).

The residue at position 66 (K66) is an N6-(pyridoxal phosphate)lysine. The active site involves H70. Pyridoxal 5'-phosphate is bound at residue 118–121; that stretch reads GEFG. A CCCFC; essential for catalytic activity, may be the site of iron coordination motif is present at residues 191 to 195; sequence CCCFC.

The protein belongs to the NMT1/THI5 family. In terms of assembly, homodimer. It depends on Fe cation as a cofactor.

The enzyme catalyses N(6)-(pyridoxal phosphate)-L-lysyl-[4-amino-5-hydroxymethyl-2-methylpyrimidine phosphate synthase] + L-histidyl-[4-amino-5-hydroxymethyl-2-methylpyrimidine phosphate synthase] + 2 Fe(3+) + 4 H2O = L-lysyl-[4-amino-5-hydroxymethyl-2-methylpyrimidine phosphate synthase] + (2S)-2-amino-5-hydroxy-4-oxopentanoyl-[4-amino-5-hydroxymethyl-2-methylpyrimidine phosphate synthase] + 4-amino-2-methyl-5-(phosphooxymethyl)pyrimidine + 3-oxopropanoate + 2 Fe(2+) + 2 H(+). The protein operates within cofactor biosynthesis; thiamine diphosphate biosynthesis. Functionally, responsible for the formation of the pyrimidine heterocycle in the thiamine biosynthesis pathway. Catalyzes the formation of hydroxymethylpyrimidine phosphate (HMP-P) from histidine and pyridoxal phosphate (PLP). The protein uses PLP and the active site histidine to form HMP-P, generating an inactive enzyme. The enzyme can only undergo a single turnover, which suggests it is a suicide enzyme. This chain is 4-amino-5-hydroxymethyl-2-methylpyrimidine phosphate synthase, found in Legionella pneumophila subsp. pneumophila (strain Philadelphia 1 / ATCC 33152 / DSM 7513).